The sequence spans 494 residues: Pre-hexon-linking protein IIIa (494 aa).

The peripentonal hexon-tethering domain stretch occupies residues 1–101 (MAALSPTVRA…ALLQRVGRYN (101 aa)). Residues 132–245 (GSLVALNGFL…FTDSRTVNGD (114 aa)) form a binding to hexon-linking protein region. Thr268 is modified (phosphothreonine; by host). Phosphoserine; by host occurs at positions 439 and 456. A propeptide spanning residues 484-494 (TNPFKHLQPQF) is cleaved from the precursor.

Belongs to the adenoviridae hexon-linking protein IIIa family. Interacts with hexon proteins; this interaction tethers the peripentonal hexons to hexons situated in the facet. Interacts with the penton protein (via N-terminus). Interacts with packaging protein 3; this interaction is required to promote correct genome packaging. Cleaved near the C-terminus by the viral protease during virion maturation to form the mature protein.

The protein resides in the virion. It localises to the host nucleus. Structural component of the virion that acts as a cement protein on the capsid exterior which mediates the interactions between the hexons, including the peripentonal hexons, and reaches all the way to the penton vertices. Two hexon linking proteins IIIa, one from each facet, stabilize the unique edge interface between a pair of facets. As the virus enters the host cell, hexon linking proteins IIIa are shed concomitant with virion acidification in the endosome. During virus assembly, seems to play a role in the serotype specificity of the packaging of viral DNA via its interaction with packaging protein 3. The polypeptide is Pre-hexon-linking protein IIIa (Murine adenovirus A serotype 1 (MAdV-1)).